Consider the following 237-residue polypeptide: tRNA1(Val) (adenine(37)-N6)-methyltransferase (237 aa).

This sequence belongs to the methyltransferase superfamily. tRNA (adenine-N(6)-)-methyltransferase family.

Its subcellular location is the cytoplasm. The enzyme catalyses adenosine(37) in tRNA1(Val) + S-adenosyl-L-methionine = N(6)-methyladenosine(37) in tRNA1(Val) + S-adenosyl-L-homocysteine + H(+). Functionally, specifically methylates the adenine in position 37 of tRNA(1)(Val) (anticodon cmo5UAC). This chain is tRNA1(Val) (adenine(37)-N6)-methyltransferase, found in Pasteurella multocida (strain Pm70).